Consider the following 4493-residue polypeptide: MPRPGTMALCLLTLVLSLLPPQAAAEQDLSVNRAVWDGGGCISQGDVLNRQCQQLSQHVRTGSAANTATGTTSTNVVEPRMYLSCSTNPEMTSIESSVTSDTPGVSSTRMTPTESRTTSESTSDSTTLFPSSTEDTSSPTTPEGTDVPMSTPSEESISSTMAFVSTAPLPSFEAYTSLTYKVDMSTPLTTSTQASSSPTTPESTTIPKSTNSEGSTPLTSMPASTMKVASSEAITLLTTPVEISTPVTISAQASSSPTTAEGPSLSNSAPSGGSTPLTRMPLSVMLVVSSEASTLSTTPAATNIPVITSTEASSSPTTAEGTSIPTSTYTEGSTPLTSTPASTMPVATSEMSTLSITPVDTSTLVTTSTEPSSLPTTAEATSMLTSTLSEGSTPLTNMPVSTILVASSEASTTSTIPVDSKTFVTTASEASSSPTTAEDTSIATSTPSEGSTPLTSMPVSTTPVASSEASNLSTTPVDSKTQVTTSTEASSSPPTAEVNSMPTSTPSEGSTPLTSMSVSTMPVASSEASTLSTTPVDTSTPVTTSSEASSSSTTPEGTSIPTSTPSEGSTPLTNMPVSTRLVVSSEASTTSTTPADSNTFVTTSSEASSSSTTAEGTSMPTSTYSERGTTITSMSVSTTLVASSEASTLSTTPVDSNTPVTTSTEATSSSTTAEGTSMPTSTYTEGSTPLTSMPVNTTLVASSEASTLSTTPVDTSTPVTTSTEASSSPTTADGASMPTSTPSEGSTPLTSMPVSKTLLTSSEASTLSTTPLDTSTHITTSTEASCSPTTTEGTSMPISTPSEGSPLLTSIPVSITPVTSPEASTLSTTPVDSNSPVTTSTEVSSSPTPAEGTSMPTSTYSEGRTPLTSMPVSTTLVATSAISTLSTTPVDTSTPVTNSTEARSSPTTSEGTSMPTSTPGEGSTPLTSMPDSTTPVVSSEARTLSATPVDTSTPVTTSTEATSSPTTAEGTSIPTSTPSEGTTPLTSTPVSHTLVANSEASTLSTTPVDSNTPLTTSTEASSPPPTAEGTSMPTSTPSEGSTPLTRMPVSTTMVASSETSTLSTTPADTSTPVTTYSQASSSSTTADGTSMPTSTYSEGSTPLTSVPVSTRLVVSSEASTLSTTPVDTSIPVTTSTEASSSPTTAEGTSIPTSPPSEGTTPLASMPVSTTLVVSSEANTLSTTPVDSKTQVATSTEASSPPPTAEVTSMPTSTPGERSTPLTSMPVRHTPVASSEASTLSTSPVDTSTPVTTSAETSSSPTTAEGTSLPTSTTSEGSTLLTSIPVSTTLVTSPEASTLLTTPVDTKGPVVTSNEVSSSPTPAEGTSMPTSTYSEGRTPLTSIPVNTTLVASSAISILSTTPVDNSTPVTTSTEACSSPTTSEGTSMPNSNPSEGTTPLTSIPVSTTPVVSSEASTLSATPVDTSTPGTTSAEATSSPTTAEGISIPTSTPSEGKTPLKSIPVSNTPVANSEASTLSTTPVDSNSPVVTSTAVSSSPTPAEGTSIAISTPSEGSTALTSIPVSTTTVASSEINSLSTTPAVTSTPVTTYSQASSSPTTADGTSMQTSTYSEGSTPLTSLPVSTMLVVSSEANTLSTTPIDSKTQVTASTEASSSTTAEGSSMTISTPSEGSPLLTSIPVSTTPVASPEASTLSTTPVDSNSPVITSTEVSSSPTPAEGTSMPTSTYTEGRTPLTSITVRTTPVASSAISTLSTTPVDNSTPVTTSTEARSSPTTSEGTSMPNSTPSEGTTPLTSIPVSTTPVLSSEASTLSATPIDTSTPVTTSTEATSSPTTAEGTSIPTSTLSEGMTPLTSTPVSHTLVANSEASTLSTTPVDSNSPVVTSTAVSSSPTPAEGTSIATSTPSEGSTALTSIPVSTTTVASSETNTLSTTPAVTSTPVTTYAQVSSSPTTADGSSMPTSTPREGRPPLTSIPVSTTTVASSEINTLSTTLADTRTPVTTYSQASSSPTTADGTSMPTPAYSEGSTPLTSMPLSTTLVVSSEASTLSTTPVDTSTPATTSTEGSSSPTTAGGTSIQTSTPSERTTPLAGMPVSTTLVVSSEGNTLSTTPVDSKTQVTNSTEASSSATAEGSSMTISAPSEGSPLLTSIPLSTTPVASPEASTLSTTPVDSNSPVITSTEVSSSPIPTEGTSMQTSTYSDRRTPLTSMPVSTTVVASSAISTLSTTPVDTSTPVTNSTEARSSPTTSEGTSMPTSTPSEGSTPFTSMPVSTMPVVTSEASTLSATPVDTSTPVTTSTEATSSPTTAEGTSIPTSTLSEGTTPLTSIPVSHTLVANSEVSTLSTTPVDSNTPFTTSTEASSPPPTAEGTSMPTSTSSEGNTPLTRMPVSTTMVASFETSTLSTTPADTSTPVTTYSQAGSSPTTADDTSMPTSTYSEGSTPLTSVPVSTMPVVSSEASTHSTTPVDTSTPVTTSTEASSSPTTAEGTSIPTSPPSEGTTPLASMPVSTTPVVSSEAGTLSTTPVDTSTPMTTSTEASSSPTTAEDIVVPISTASEGSTLLTSIPVSTTPVASPEASTLSTTPVDSNSPVVTSTEISSSATSAEGTSMPTSTYSEGSTPLRSMPVSTKPLASSEASTLSTTPVDTSIPVTTSTETSSSPTTAKDTSMPISTPSEVSTSLTSILVSTMPVASSEASTLSTTPVDTRTLVTTSTGTSSSPTTAEGSSMPTSTPGERSTPLTNILVSTTLLANSEASTLSTTPVDTSTPVTTSAEASSSPTTAEGTSMRISTPSDGSTPLTSILVSTLPVASSEASTVSTTAVDTSIPVTTSTEASSSPTTAEVTSMPTSTPSETSTPLTSMPVNHTPVASSEAGTLSTTPVDTSTPVTTSTKASSSPTTAEGIVVPISTASEGSTLLTSIPVSTTPVASSEASTLSTTPVDTSIPVTTSTEGSSSPTTAEGTSMPISTPSEVSTPLTSILVSTVPVAGSEASTLSTTPVDTRTPVTTSAEASSSPTTAEGTSMPISTPGERRTPLTSMSVSTMPVASSEASTLSRTPADTSTPVTTSTEASSSPTTAEGTGIPISTPSEGSTPLTSIPVSTTPVAIPEASTLSTTPVDSNSPVVTSTEVSSSPTPAEGTSMPISTYSEGSTPLTGVPVSTTPVTSSAISTLSTTPVDTSTPVTTSTEAHSSPTTSEGTSMPTSTPSEGSTPLTYMPVSTMLVVSSEDSTLSATPVDTSTPVTTSTEATSSTTAEGTSIPTSTPSEGMTPLTSVPVSNTPVASSEASILSTTPVDSNTPLTTSTEASSSPPTAEGTSMPTSTPSEGSTPLTSMPVSTTTVASSETSTLSTTPADTSTPVTTYSQASSSPPIADGTSMPTSTYSEGSTPLTNMSFSTTPVVSSEASTLSTTPVDTSTPVTTSTEASLSPTTAEGTSIPTSSPSEGTTPLASMPVSTTPVVSSEVNTLSTTPVDSNTLVTTSTEASSSPTIAEGTSLPTSTTSEGSTPLSIMPLSTTPVASSEASTLSTTPVDTSTPVTTSSPTNSSPTTAEVTSMPTSTAGEGSTPLTNMPVSTTPVASSEASTLSTTPVDSNTFVTSSSQASSSPATLQVTTMRMSTPSEGSSSLTTMLLSSTYVTSSEASTPSTPSVDRSTPVTTSTQSNSTPTPPEVITLPMSTPSEVSTPLTIMPVSTTSVTISEAGTASTLPVDTSTPVITSTQVSSSPVTPEGTTMPIWTPSEGSTPLTTMPVSTTRVTSSEGSTLSTPSVVTSTPVTTSTEAISSSATLDSTTMSVSMPMEISTLGTTILVSTTPVTRFPESSTPSIPSVYTSMSMTTASEGSSSPTTLEGTTTMPMSTTSERSTLLTTVLISPISVMSPSEASTLSTPPGDTSTPLLTSTKAGSFSIPAEVTTIRISITSERSTPLTTLLVSTTLPTSFPGASIASTPPLDTSTTFTPSTDTASTPTIPVATTISVSVITEGSTPGTTIFIPSTPVTSSTADVFPATTGAVSTPVITSTELNTPSTSSSSTTTSFSTTKEFTTPAMTTAAPLTYVTMSTAPSTPRTTSRGCTTSASTLSATSTPHTSTSVTTRPVTPSSESSRPSTITSHTIPPTFPPAHSSTPPTTSASSTTVNPEAVTTMTTRTKPSTRTTSFPTVTTTAVPTNTTIKSNPTSTPTVPRTTTCFGDGCQNTASRCKNGGTWDGLKCQCPNLYYGELCEEVVSSIDIGPPETISAQMELTVTVTSVKFTEELKNHSSQEFQEFKQTFTEQMNIVYSGIPEYVGVNITKLRLGSVVVEHDVLLRTKYTPEYKTVLDNATEVVKEKITKVTTQQIMINDICSDMMCFNTTGTQVQNITVTQYDPEEDCRKMAKEYGDYFVVEYRDQKPYCISPCEPGFSVSKNCNLGKCQMSLSGPQCLCVTTETHWYSGETCNQGTQKSLVYGLVGAGVVLMLIILVALLMLVFRSKREVKRQKYRLSQLYKWQEEDSGPAPGTFQNIGFDICQDDDSIHLESIYSNFQPSLRHIDPETKIRIQRPQVMTTSF.

Positions 1–25 (MPRPGTMALCLLTLVLSLLPPQAAA) are cleaved as a signal peptide. At 26–4393 (EQDLSVNRAV…QGTQKSLVYG (4368 aa)) the chain is on the extracellular side. Residues 88–105 (NPEMTSIESSVTSDTPGV) are compositionally biased toward polar residues. Disordered regions lie at residues 88–159 (NPEM…SISS), 188–223 (LTTS…SMPA), 248–277 (TISA…STPL), and 306–344 (VITS…ASTM). Over residues 106–146 (SSTRMTPTESRTTSESTSDSTTLFPSSTEDTSSPTTPEGTD) the composition is skewed to low complexity. The segment covering 148–159 (PMSTPSEESISS) has biased composition (polar residues). 57 tandem repeats follow at residues 185 to 245 (STPL…EIST), 246 to 300 (PVTI…TTPA), 301 to 361 (ATNI…PVDT), 362 to 418 (STLV…TIPV), 420 to 477 (SKTF…TTPV), 479 to 538 (SKTQ…PVDT), 539 to 597 (STPV…PADS), 598 to 654 (NTFV…TTPV), 656 to 715 (SNTP…PVDT), 716 to 774 (STPV…PLDT), 775 to 831 (STHI…TTPV), 833 to 892 (SNSP…PVDT), 893 to 951 (STPV…PVDT), 952 to 1010 (STPV…PVDS), 1011 to 1069 (NTPL…PADT), 1070 to 1121 (STPV…ASTL), 1122 to 1187 (STTP…PVDS), 1188 to 1246 (KTQV…PVDT), 1247 to 1305 (STPV…PVDT), 1306 to 1364 (KGPV…PVDN), 1365 to 1423 (STPV…PVDT), 1424 to 1482 (STPG…PVDS), 1483 to 1541 (NSPV…PAVT), 1542 to 1600 (STPV…PIDS), 1601 to 1656 (KTQV…TTPV), 1658 to 1717 (SNSP…PVDN), 1718 to 1776 (STPV…PIDT), 1777 to 1835 (STPV…PVDS), 1836 to 1895 (NSPV…AVTS), 1896 to 1951 (TPVT…TTLA), 1953 to 2012 (TRTP…PVDT), 2013 to 2071 (STPA…PVDS), 2072 to 2127 (KTQV…TTPV), 2129 to 2188 (SNSP…PVDT), 2189 to 2247 (STPV…PVDT), 2248 to 2306 (STPV…PVDS), 2307 to 2365 (NTPF…PADT), 2366 to 2424 (STPV…PVDT), 2425 to 2483 (STPV…PVDT), 2484 to 2540 (STPM…TTPV), 2542 to 2601 (SNSP…PVDT), 2602 to 2653 (SIPV…ASTL), 2654 to 2719 (STTP…PVDT), 2720 to 2770 (STPV…EAST), 2772 to 2837 (STTA…PVDT), 2838 to 2896 (STPV…PVDT), 2897 to 2955 (SIPV…PVDT), 2956 to 3014 (RTPV…PADT), 3015 to 3073 (STPV…PVDS), 3074 to 3132 (NSPV…PVDT), 3133 to 3191 (STPV…PVDT), 3192 to 3247 (STPV…TTPV), 3249 to 3308 (SNTP…PADT), 3309 to 3367 (STPV…PVDT), 3368 to 3426 (STPV…PVDS), 3427 to 3485 (NTLV…PVDT), and 3486 to 3544 (STPV…PVDS). The tract at residues 185 to 3727 (STPLTTSTQA…SVVTSTPVTT (3543 aa)) is 59 X approximate tandem repeats. Residues 188–210 (LTTSTQASSSPTTPESTTIPKST) are compositionally biased toward low complexity. A compositionally biased stretch (polar residues) spans 211–223 (NSEGSTPLTSMPA). Positions 308 to 323 (TSTEASSSPTTAEGTS) are enriched in low complexity. Positions 324–344 (IPTSTYTEGSTPLTSTPASTM) are enriched in polar residues. Residues 425-441 (TTASEASSSPTTAEDTS) are compositionally biased toward low complexity. Disordered regions lie at residues 425 to 629 (TTAS…ERGT), 644 to 868 (SEAS…TPLT), 886 to 1104 (STTP…TPLT), 1116 to 1163 (SEAS…TPLA), 1175 to 1279 (SEAN…GSTL), and 1296 to 1338 (STLL…GRTP). Over residues 442–483 (IATSTPSEGSTPLTSMPVSTTPVASSEASNLSTTPVDSKTQV) the composition is skewed to polar residues. A glycan (N-linked (GlcNAc...) asparagine) is linked at Asn-471. Residues 484 to 497 (TTSTEASSSPPTAE) show a composition bias toward low complexity. Residues 498–528 (VNSMPTSTPSEGSTPLTSMSVSTMPVASSEA) are compositionally biased toward polar residues. Low complexity-rich tracts occupy residues 529 to 573 (STLS…TPLT) and 584 to 618 (SSEA…EGTS). Composition is skewed to polar residues over residues 619–629 (MPTSTYSERGT) and 644–660 (SEAS…NTPV). A compositionally biased stretch (low complexity) spans 661 to 677 (TTSTEATSSSTTAEGTS). The segment covering 678 to 705 (MPTSTYTEGSTPLTSMPVNTTLVASSEA) has biased composition (polar residues). Residue Asn-696 is glycosylated (N-linked (GlcNAc...) asparagine). A compositionally biased stretch (low complexity) spans 706–733 (STLSTTPVDTSTPVTTSTEASSSPTTAD). The span at 737–754 (MPTSTPSEGSTPLTSMPV) shows a compositional bias: polar residues. A compositionally biased stretch (low complexity) spans 755–776 (SKTLLTSSEASTLSTTPLDTST). A compositionally biased stretch (polar residues) spans 777–832 (HITTSTEASCSPTTTEGTSMPISTPSEGSPLLTSIPVSITPVTSPEASTLSTTPVD). Positions 833 to 849 (SNSPVTTSTEVSSSPTP) are enriched in low complexity. Over residues 854 to 868 (SMPTSTYSEGRTPLT) the composition is skewed to polar residues. The segment covering 886 to 900 (STTPVDTSTPVTNST) has biased composition (low complexity). Asn-898 carries an N-linked (GlcNAc...) asparagine glycan. Positions 901–944 (EARSSPTTSEGTSMPTSTPGEGSTPLTSMPDSTTPVVSSEARTL) are enriched in polar residues. Positions 945-972 (SATPVDTSTPVTTSTEATSSPTTAEGTS) are enriched in low complexity. Positions 973–1011 (IPTSTPSEGTTPLTSTPVSHTLVANSEASTLSTTPVDSN) are enriched in polar residues. The span at 1012 to 1021 (TPLTTSTEAS) shows a compositional bias: low complexity. Residues 1029–1062 (GTSMPTSTPSEGSTPLTRMPVSTTMVASSETSTL) show a composition bias toward polar residues. Residues 1063-1090 (STTPADTSTPVTTYSQASSSSTTADGTS) are compositionally biased toward low complexity. Polar residues-rich tracts occupy residues 1091 to 1104 (MPTS…TPLT) and 1116 to 1132 (SEAS…SIPV). Over residues 1133-1149 (TTSTEASSSPTTAEGTS) the composition is skewed to low complexity. Composition is skewed to polar residues over residues 1175-1198 (SEAN…TEAS) and 1205-1222 (EVTS…TPLT). The segment covering 1237–1279 (STLSTSPVDTSTPVTTSAETSSSPTTAEGTSLPTSTTSEGSTL) has biased composition (low complexity). 2 stretches are compositionally biased toward polar residues: residues 1310 to 1320 (VTSNEVSSSPT) and 1326 to 1338 (SMPT…GRTP). N-linked (GlcNAc...) asparagine glycosylation is present at Asn-1345. The segment covering 1360–1394 (TPVDNSTPVTTSTEACSSPTTSEGTSMPNSNPSEG) has biased composition (polar residues). Disordered regions lie at residues 1360–1516 (TPVD…STAL), 1537–1575 (TPAV…STPL), 1590–1930 (ANTL…PLTS), 1947–2163 (STTL…RTPL), 2177–2281 (AIST…TTPL), 2295–2501 (EVST…TTAE), 2524–2630 (TTPV…TPSE), 2647–2693 (SSEA…RSTP), 2709–2751 (ASTL…DGST), 2765–2853 (SSEA…SPTT), 2879–2925 (TPVA…TPSE), 2942–3167 (GSEA…TPLT), 3182–3577 (STLS…GSSS), 3589–3635 (TSSE…EVST), 3667–3701 (ITST…TMPV), 3785–3812 (MTTA…TSER), 3829–3849 (PSEA…LLTS), 3892–3914 (ASIA…DTAS), 3965–3988 (VITS…FSTT), and 4008–4129 (STAP…TPTV). 2 stretches are compositionally biased toward low complexity: residues 1395-1415 (TTPL…EAST) and 1423-1442 (TSTP…TAEG). Residues 1461 to 1483 (PVSNTPVANSEASTLSTTPVDSN) are compositionally biased toward polar residues. Low complexity predominate over residues 1484 to 1499 (SPVVTSTAVSSSPTPA). Positions 1504-1516 (IAISTPSEGSTAL) are enriched in polar residues. Over residues 1537 to 1547 (TPAVTSTPVTT) the composition is skewed to low complexity. 2 stretches are compositionally biased toward polar residues: residues 1548 to 1575 (YSQA…STPL) and 1590 to 1604 (ANTL…KTQV). Over residues 1605–1620 (TASTEASSSTTAEGSS) the composition is skewed to low complexity. Polar residues-rich tracts occupy residues 1621 to 1673 (MTIS…SSPT) and 1679 to 1775 (SMPT…TPID). Residues 1776–1797 (TSTPVTTSTEATSSPTTAEGTS) are compositionally biased toward low complexity. The segment covering 1798 to 1836 (IPTSTLSEGMTPLTSTPVSHTLVANSEASTLSTTPVDSN) has biased composition (polar residues). A compositionally biased stretch (low complexity) spans 1837–1852 (SPVVTSTAVSSSPTPA). The segment covering 1856–1883 (SIATSTPSEGSTALTSIPVSTTTVASSE) has biased composition (polar residues). Positions 1884 to 1900 (TNTLSTTPAVTSTPVTT) are enriched in low complexity. 2 stretches are compositionally biased toward polar residues: residues 1901–1921 (YAQV…TSTP) and 1947–1976 (STTL…TSMP). A compositionally biased stretch (low complexity) spans 1984–2033 (STPLTSMPLSTTLVVSSEASTLSTTPVDTSTPATTSTEGSSSPTTAGGTS). Polar residues-rich tracts occupy residues 2034-2043 (IQTSTPSERT) and 2051-2077 (VSTT…QVTN). Asn-2077 carries an N-linked (GlcNAc...) asparagine glycan. The segment covering 2078–2091 (STEASSSATAEGSS) has biased composition (low complexity). The span at 2092–2156 (MTISAPSEGS…EGTSMQTSTY (65 aa)) shows a compositional bias: polar residues. Positions 2177 to 2196 (AISTLSTTPVDTSTPVTNST) are enriched in low complexity. An N-linked (GlcNAc...) asparagine glycan is attached at Asn-2194. Positions 2197 to 2240 (EARSSPTTSEGTSMPTSTPSEGSTPFTSMPVSTMPVVTSEASTL) are enriched in polar residues. The segment covering 2241-2268 (SATPVDTSTPVTTSTEATSSPTTAEGTS) has biased composition (low complexity). Composition is skewed to polar residues over residues 2269–2281 (IPTS…TTPL) and 2295–2307 (EVST…VDSN). The segment covering 2308–2317 (TPFTTSTEAS) has biased composition (low complexity). Residues 2325–2358 (GTSMPTSTSSEGNTPLTRMPVSTTMVASFETSTL) are compositionally biased toward polar residues. Low complexity predominate over residues 2359–2371 (STTPADTSTPVTT). Residues 2372–2395 (YSQAGSSPTTADDTSMPTSTYSEG) show a composition bias toward polar residues. Composition is skewed to low complexity over residues 2396-2445 (STPL…EGTS) and 2462-2499 (PVST…SPTT). The span at 2524–2547 (TTPVASPEASTLSTTPVDSNSPVV) shows a compositional bias: polar residues. Residues 2548 to 2563 (TSTEISSSATSAEGTS) are compositionally biased toward low complexity. Positions 2564 to 2576 (MPTSTYSEGSTPL) are enriched in polar residues. The span at 2586 to 2617 (LASSEASTLSTTPVDTSIPVTTSTETSSSPTT) shows a compositional bias: low complexity. A compositionally biased stretch (polar residues) spans 2618–2628 (AKDTSMPISTP). Residues 2654–2681 (STTPVDTRTLVTTSTGTSSSPTTAEGSS) show a composition bias toward low complexity. Positions 2682-2693 (MPTSTPGERSTP) are enriched in polar residues. Over residues 2710–2740 (STLSTTPVDTSTPVTTSAEASSSPTTAEGTS) the composition is skewed to low complexity. Residues 2741 to 2751 (MRISTPSDGST) are compositionally biased toward polar residues. 2 stretches are compositionally biased toward low complexity: residues 2765 to 2816 (SSEA…TSMP) and 2829 to 2853 (TLST…SPTT). Polar residues predominate over residues 2879–2900 (TPVASSEASTLSTTPVDTSIPV). Composition is skewed to low complexity over residues 2901-2917 (TTST…EGTS) and 2950-2976 (TTPV…EGTS). Residues 2988–3009 (PLTSMSVSTMPVASSEASTLSR) are compositionally biased toward polar residues. Residues 3010–3031 (TPADTSTPVTTSTEASSSPTTA) show a composition bias toward low complexity. Residues 3037-3057 (PISTPSEGSTPLTSIPVSTTP) show a composition bias toward polar residues. 2 stretches are compositionally biased toward low complexity: residues 3073-3089 (SNSP…SPTP) and 3104-3140 (STPL…TTST). Positions 3141–3166 (EAHSSPTTSEGTSMPTSTPSEGSTPL) are enriched in polar residues. Low complexity predominate over residues 3185-3211 (SATPVDTSTPVTTSTEATSSTTAEGTS). The span at 3212 to 3253 (IPTSTPSEGMTPLTSVPVSNTPVASSEASILSTTPVDSNTPL) shows a compositional bias: polar residues. Residues 3254–3267 (TTSTEASSSPPTAE) are compositionally biased toward low complexity. The segment covering 3268–3288 (GTSMPTSTPSEGSTPLTSMPV) has biased composition (polar residues). The span at 3289 to 3314 (STTTVASSETSTLSTTPADTSTPVTT) shows a compositional bias: low complexity. Positions 3329 to 3357 (SMPTSTYSEGSTPLTNMSFSTTPVVSSEA) are enriched in polar residues. N-linked (GlcNAc...) asparagine glycosylation occurs at Asn-3344. Residues 3358-3375 (STLSTTPVDTSTPVTTST) are compositionally biased toward low complexity. Over residues 3376–3401 (EASLSPTTAEGTSIPTSSPSEGTTPL) the composition is skewed to polar residues. A compositionally biased stretch (low complexity) spans 3405–3414 (PVSTTPVVSS). Composition is skewed to polar residues over residues 3415 to 3441 (EVNT…SSPT) and 3447 to 3475 (SLPT…SSEA). Residues 3476-3501 (STLSTTPVDTSTPVTTSSPTNSSPTT) show a composition bias toward low complexity. Composition is skewed to polar residues over residues 3502–3549 (AEVT…TFVT) and 3558–3571 (PATL…MSTP). The span at 3589-3616 (TSSEASTPSTPSVDRSTPVTTSTQSNST) shows a compositional bias: low complexity. 2 consecutive repeat copies span residues 3604-3662 (STPV…PVDT) and 3663-3727 (STPV…PVTT). Polar residues predominate over residues 3626 to 3635 (PMSTPSEVST). Residues 3667–3679 (ITSTQVSSSPVTP) show a composition bias toward low complexity. 2 stretches are compositionally biased toward polar residues: residues 3690–3701 (SEGSTPLTTMPV) and 3785–3806 (MTTA…TMPM). Low complexity-rich tracts occupy residues 3967–3988 (TSTE…FSTT), 4008–4083 (STAP…SSTT), and 4090–4129 (TTMT…TPTV). A glycan (N-linked (GlcNAc...) asparagine) is linked at Asn-4116. Residues 4131–4170 (RTTTCFGDGCQNTASRCKNGGTWDGLKCQCPNLYYGELCE) enclose the EGF-like domain. Cystine bridges form between Cys-4135-Cys-4147, Cys-4140-Cys-4158, and Cys-4160-Cys-4169. Residues 4184 to 4291 (ISAQMELTVT…QQIMINDICS (108 aa)) form the SEA domain. N-linked (GlcNAc...) asparagine glycans are attached at residues Asn-4205, Asn-4236, Asn-4267, Asn-4297, and Asn-4305. Residues 4394–4414 (LVGAGVVLMLIILVALLMLVF) form a helical membrane-spanning segment. Residues 4415 to 4493 (RSKREVKRQK…QRPQVMTTSF (79 aa)) are Cytoplasmic-facing.

As to quaternary structure, interacts via its C-terminus with PDZK1 and this interaction appears important for proper localization. Probably cleaved within the SEA domain. Post-translationally, N-glycosylated. Contains high mannose and complex-type glycans. The forms containing the complex type glycans localize to the cell surface. Not O-glycosylated. In terms of tissue distribution, expressed almost exclusively in the intestine. Expression is especially high in both the duodenum and transverse colon. Expressed in mature absorptive cells of the small intestinal villi. No expression is detected in goblet cells. Highly expressed in pancreatic adenocarcinoma tissue (at protein level). Expression is not detectable in normal pancreas, in pancreatitis or in cell lines derived from other cancers.

It localises to the cell membrane. It is found in the secreted. Probably plays a role in maintaining homeostasis on mucosal surfaces. The polypeptide is Mucin-17 (MUC17) (Homo sapiens (Human)).